The chain runs to 139 residues: D-ribose pyranase (139 aa).

Residue H20 is the Proton donor of the active site. Substrate contacts are provided by residues D28, H106, and 128-130 (YAN).

The protein belongs to the RbsD / FucU family. RbsD subfamily. In terms of assembly, homodecamer.

The protein localises to the cytoplasm. The catalysed reaction is beta-D-ribopyranose = beta-D-ribofuranose. Its pathway is carbohydrate metabolism; D-ribose degradation; D-ribose 5-phosphate from beta-D-ribopyranose: step 1/2. Functionally, catalyzes the interconversion of beta-pyran and beta-furan forms of D-ribose. This chain is D-ribose pyranase, found in Vibrio parahaemolyticus serotype O3:K6 (strain RIMD 2210633).